A 96-amino-acid chain; its full sequence is UPF0358 protein Aflv_1873 (96 aa).

Belongs to the UPF0358 family.

This is UPF0358 protein Aflv_1873 from Anoxybacillus flavithermus (strain DSM 21510 / WK1).